Here is a 117-residue protein sequence, read N- to C-terminus: Large ribosomal subunit protein bL20 (117 aa).

This sequence belongs to the bacterial ribosomal protein bL20 family.

Binds directly to 23S ribosomal RNA and is necessary for the in vitro assembly process of the 50S ribosomal subunit. It is not involved in the protein synthesizing functions of that subunit. The chain is Large ribosomal subunit protein bL20 from Rickettsia bellii (strain OSU 85-389).